The chain runs to 1148 residues: MGELSPVCLYLLLQGLLLCNTGAARNLNELKMECPHTIRLGQGLVVGSVELPSLPIQQVETLKLESSCNFDLHTSTAGQQSFTKWTWEIKGDLAENTQASSTSFQTKSSEVNLRGLCLIPTLVVETAARMRKTIACYDLSCNQTVCQPTVYLMGPIQTCITTKSCLLSLGDQRIQVNYEKTYCVSGQLVEGICFNPIHTMALSQPSHTYDIMTMMVRCFLVIKKVTSGDSMKIEKNFETLVQKNGCTANNFQGYYICLIGSSSEPLYVPALDDYRSAEVLSRMAFAPHGEDHDIEKNAVSAMRIAGKVTGKAPSTESSDTVQGIAFSGSPLYTSTGVLTSKDDPVYIWAPGIIMEGNHSICEKKTLPLTWTGFISLPGEIEKTTQCTVFCTLAGPGADCEAYSETGIFNISSPTCSINRVQRFRGSEQQIKFVCQRVDMDITVYCNGMKKVILTKTLVIGQCIYTFTSIFSLIPGVAHSLAVELCVPGLHGWATMLLLLTLCFGWVLIPTITMILLKILIAFAYLCSKYNTDSKFRILIEKVKREYQKTMGSMVCEVCQYECETAKELESHRKSCSIGSCPYCLNPSEATTSALQAHFKVCKLTSRFQENLRKSLTVYEPMQGCYRTLSLFRYRSRFFVGLVWCVLLVLELIVWAASAETQNLNAGWTDTAHGSGIIPMKTDLELDFSLPSSASYTYRRQLQNPANEQEKIPFHLQLSKQVIHAEIQHLGHWMDATFNLKTAFHCYGSCEKYAYPWQTAGCFIEKDYEYETGWGCNPPDCPGVGTGCTACGVYLDKLKSVGKVFKIVSLRYTRKVCIQLGTEQTCKTVDSNDCLITTSVKVCLIGTISKFQPSDTLLFLGPLQQGGLIFKQWCTTTCQFGDPGDIMSTPTGMKCPELNGSFRKKCAFATTPVCQFDGNTISGYKRMIATKDSFQSFNVTEPHISTSALEWIDPDSSLRDHINVIVSRDLSFQDLSETPCQIDLATASIDGAWGSGVGFNLVCTVSLTECSAFLTSIKACDAAMCYGSTTANLVRGQNTIHIVGKGGHSGSKFMCCHDTKCSSTGLVAAAPHLDRVTGYNQADSDKIFDDGAPECGMSCWFKKSGEWILGVLNGNWMVVAVLVVLLILSILLFTLCCPRRPSYRKEHKP.

Residues 1 to 23 (MGELSPVCLYLLLQGLLLCNTGA) form the signal peptide. Topologically, residues 24–495 (ARNLNELKME…VPGLHGWATM (472 aa)) are lumenal. 6 cysteine pairs are disulfide-bonded: Cys-34–Cys-159, Cys-68–Cys-165, Cys-117–Cys-136, Cys-141–Cys-146, Cys-183–Cys-193, and Cys-218–Cys-257. Asn-142 carries N-linked (GlcNAc...) asparagine; by host glycosylation. N-linked (GlcNAc...) asparagine; by host glycosylation is present at Asn-357. 4 disulfide bridges follow: Cys-386–Cys-445, Cys-390–Cys-399, Cys-415–Cys-434, and Cys-462–Cys-485. Asn-409 carries an N-linked (GlcNAc...) asparagine; by host glycan. Residues 496-516 (LLLLTLCFGWVLIPTITMILL) traverse the membrane as a helical segment. Topologically, residues 517 to 637 (KILIAFAYLC…LSLFRYRSRF (121 aa)) are cytoplasmic. Positions 526 to 543 (CSKYNTDSKFRILIEKVK) are binding to the ribonucleoprotein. 2 CCHC-type zinc fingers span residues 555–575 (CEVC…RKSC) and 580–601 (CPYC…FKVC). Binding to the ribonucleoprotein stretches follow at residues 598–615 (FKVC…RKSL), 602–613 (KLTSRFQENLRK), and 621–635 (MQGC…RYRS). One can recognise an ITAM domain in the interval 621–644 (MQGCYRTLSLFRYRSRFFVGLVWC). The short motif at 625-628 (YRTL) is the YxxL element. Residues 638-658 (FVGLVWCVLLVLELIVWAASA) traverse the membrane as a helical segment. Over 659–1114 (ETQNLNAGWT…EWILGVLNGN (456 aa)) the chain is Lumenal. 8 cysteine pairs are disulfide-bonded: Cys-745/Cys-780, Cys-749/Cys-787, Cys-761/Cys-894, Cys-775/Cys-905, Cys-790/Cys-913, Cys-816/Cys-825, Cys-833/Cys-842, and Cys-873/Cys-877. Residues 767–787 (YEYETGWGCNPPDCPGVGTGC) are fusion loop. Residue Asn-937 is glycosylated (N-linked (GlcNAc...) asparagine; by host). 5 disulfide bridges follow: Cys-979–Cys-1009, Cys-1002–Cys-1054, Cys-1019–Cys-1024, Cys-1055–Cys-1060, and Cys-1094–Cys-1098. The helical transmembrane segment at 1115–1135 (WMVVAVLVVLLILSILLFTLC) threads the bilayer. Binding to the ribonucleoprotein regions lie at residues 1131-1143 (LFTL…PSYR) and 1131-1148 (LFTL…EHKP). The Cytoplasmic segment spans residues 1136–1148 (CPRRPSYRKEHKP).

It belongs to the hantavirus envelope glycoprotein family. As to quaternary structure, homodimer. Homotetramer; forms heterotetrameric Gn-Gc spikes in the pre-fusion conformation. Interacts (via C-terminus) with the nucleoprotein. Interacts with host TUFM; this interaction contributes to the virus-induced degradation of mitochondria by autophagy, which leads to degradation of host MAVS and inhibition of type I interferon (IFN) responses. Interacts with host MAP1LC3B; this interaction contributes to the virus-induced degradation of mitochondria by autophagy, which leads to degradation of host MAVS and inhibition of type I interferon (IFN) responses. In terms of assembly, homodimer. Homotetramer; forms heterotetrameric Gn-Gc spikes in the pre-fusion conformation. Homotrimer; forms homotrimer in the post-fusion conformation at acidic pH. Interacts (via C-terminus) with the nucleoprotein. Post-translationally, envelope polyprotein precursor is quickly cleaved in vivo just after synthesis, presumably by host signal peptidase.

It localises to the virion membrane. The protein resides in the host cell surface. It is found in the host Golgi apparatus membrane. The protein localises to the host endoplasmic reticulum membrane. Its subcellular location is the host mitochondrion. In terms of biological role, forms homotetramers with glycoprotein C at the surface of the virion. Attaches the virion to host cell receptors including integrin ITGAV/ITGB3. This attachment induces virion internalization predominantly through clathrin-dependent endocytosis. Mediates the assembly and budding of infectious virus particles through its interaction with the nucleocapsid protein and the viral genome. May dysregulate normal immune and endothelial cell responses through an ITAM motif. Translocates to mitochondria, binds to host TUFM and recruits MAP1LC3B. These interactions induce mitochondrial autophagy and therefore destruction of host MAVS leading to inhibition of type I interferon (IFN) responses. Concomitant breakdown of glycoprotein N is apparently prevented by the nucleoprotein that may inhibit Gn-stimulated autophagosome-lysosome fusion. Interacts with the viral genomic RNA. Functionally, forms homotetramers with glycoprotein N at the surface of the virion. Attaches the virion to host cell receptors including integrin ITGAV/ITGB3. This attachment induces virion internalization predominantly through clathrin-dependent endocytosis. Class II fusion protein that promotes fusion of viral membrane with host endosomal membrane after endocytosis of the virion. This Puumala virus (strain K27) protein is Envelopment polyprotein (GP).